The following is a 411-amino-acid chain: Translation initiation factor 2 subunit gamma (411 aa).

The tr-type G domain maps to Gln-9–Glu-201. A G1 region spans residues Gly-18–Ser-25. Mg(2+) contacts are provided by Asp-21, Ser-25, Gly-46, and Ser-48. Residue Asp-21–Thr-26 coordinates GTP. Positions Gly-46–Lys-50 are G2. The segment at Asp-88–Gly-91 is G3. GTP contacts are provided by residues Asn-144–Asp-147 and Ser-179–Tyr-181. The interval Asn-144–Asp-147 is G4. The interval Ser-179 to Tyr-181 is G5.

This sequence belongs to the TRAFAC class translation factor GTPase superfamily. Classic translation factor GTPase family. EIF2G subfamily. In terms of assembly, heterotrimer composed of an alpha, a beta and a gamma chain. It depends on Mg(2+) as a cofactor.

It catalyses the reaction GTP + H2O = GDP + phosphate + H(+). Its function is as follows. eIF-2 functions in the early steps of protein synthesis by forming a ternary complex with GTP and initiator tRNA. The chain is Translation initiation factor 2 subunit gamma from Thermoplasma volcanium (strain ATCC 51530 / DSM 4299 / JCM 9571 / NBRC 15438 / GSS1).